Reading from the N-terminus, the 103-residue chain is A-type ATP synthase subunit F (103 aa).

The protein belongs to the V-ATPase F subunit family. In terms of assembly, has multiple subunits with at least A(3), B(3), C, D, E, F, H, I and proteolipid K(x).

The protein localises to the cell membrane. In terms of biological role, component of the A-type ATP synthase that produces ATP from ADP in the presence of a proton gradient across the membrane. In Pyrococcus furiosus (strain ATCC 43587 / DSM 3638 / JCM 8422 / Vc1), this protein is A-type ATP synthase subunit F.